Here is a 125-residue protein sequence, read N- to C-terminus: Allatostatin (125 aa).

The first 26 residues, 1–26 (MKTSAYNVYLGVVAAMLALLFVTINA), serve as a signal peptide directing secretion. Residues 27–106 (APMEADDETA…SRLARQWRAD (80 aa)) constitute a propeptide that is removed on maturation. Q109 is subject to Pyrrolidone carboxylic acid.

It belongs to the allatostatin family.

The protein localises to the secreted. In terms of biological role, strongly inhibits juvenile hormone biosynthesis in vitro by the corpora allata from fifth-stadium larvae and adult females. In Spodoptera frugiperda (Fall armyworm), this protein is Allatostatin.